A 514-amino-acid chain; its full sequence is 1-pyrroline-5-carboxylate dehydrogenase (514 aa).

Catalysis depends on residues glutamate 286 and cysteine 320.

The protein belongs to the aldehyde dehydrogenase family. RocA subfamily.

The enzyme catalyses L-glutamate 5-semialdehyde + NAD(+) + H2O = L-glutamate + NADH + 2 H(+). It functions in the pathway amino-acid degradation; L-proline degradation into L-glutamate; L-glutamate from L-proline: step 2/2. This is 1-pyrroline-5-carboxylate dehydrogenase from Staphylococcus aureus (strain MW2).